The following is a 51-amino-acid chain: MKRKAEVNEAIKNNNTPTESMDPNSYKTQYHDDPNFRGANRNSKQGQQGGM.

Residues 1–51 (MKRKAEVNEAIKNNNTPTESMDPNSYKTQYHDDPNFRGANRNSKQGQQGGM) form a disordered region. Composition is skewed to polar residues over residues 11 to 28 (IKNN…SYKT) and 40 to 51 (NRNSKQGQQGGM).

This is an uncharacterized protein from Bacillus subtilis (strain 168).